Consider the following 468-residue polypeptide: Bifunctional protein HldE (468 aa).

The segment at Met1–Glu315 is ribokinase. Asn192 to Glu195 contacts ATP. Residue Asp260 is part of the active site. The interval Phe340–Lys468 is cytidylyltransferase.

The protein in the N-terminal section; belongs to the carbohydrate kinase PfkB family. It in the C-terminal section; belongs to the cytidylyltransferase family. In terms of assembly, homodimer.

The enzyme catalyses D-glycero-beta-D-manno-heptose 7-phosphate + ATP = D-glycero-beta-D-manno-heptose 1,7-bisphosphate + ADP + H(+). The catalysed reaction is D-glycero-beta-D-manno-heptose 1-phosphate + ATP + H(+) = ADP-D-glycero-beta-D-manno-heptose + diphosphate. The protein operates within nucleotide-sugar biosynthesis; ADP-L-glycero-beta-D-manno-heptose biosynthesis; ADP-L-glycero-beta-D-manno-heptose from D-glycero-beta-D-manno-heptose 7-phosphate: step 1/4. It functions in the pathway nucleotide-sugar biosynthesis; ADP-L-glycero-beta-D-manno-heptose biosynthesis; ADP-L-glycero-beta-D-manno-heptose from D-glycero-beta-D-manno-heptose 7-phosphate: step 3/4. Catalyzes the phosphorylation of D-glycero-D-manno-heptose 7-phosphate at the C-1 position to selectively form D-glycero-beta-D-manno-heptose-1,7-bisphosphate. In terms of biological role, catalyzes the ADP transfer from ATP to D-glycero-beta-D-manno-heptose 1-phosphate, yielding ADP-D-glycero-beta-D-manno-heptose. In Campylobacter curvus (strain 525.92), this protein is Bifunctional protein HldE.